The primary structure comprises 155 residues: Aspartate carbamoyltransferase regulatory chain (155 aa).

Residues Cys-109, Cys-114, Cys-138, and Cys-141 each contribute to the Zn(2+) site.

The protein belongs to the PyrI family. As to quaternary structure, contains catalytic and regulatory chains. Zn(2+) is required as a cofactor.

In terms of biological role, involved in allosteric regulation of aspartate carbamoyltransferase. This chain is Aspartate carbamoyltransferase regulatory chain, found in Vibrio cholerae serotype O1 (strain ATCC 39315 / El Tor Inaba N16961).